The following is a 388-amino-acid chain: Chorismate synthase (388 aa).

NADP(+)-binding residues include arginine 39 and arginine 45. Residues 132–134 (RSS), 251–252 (NA), glycine 296, 311–315 (KPIPT), and arginine 337 contribute to the FMN site.

The protein belongs to the chorismate synthase family. Homotetramer. FMNH2 is required as a cofactor.

The catalysed reaction is 5-O-(1-carboxyvinyl)-3-phosphoshikimate = chorismate + phosphate. It functions in the pathway metabolic intermediate biosynthesis; chorismate biosynthesis; chorismate from D-erythrose 4-phosphate and phosphoenolpyruvate: step 7/7. Functionally, catalyzes the anti-1,4-elimination of the C-3 phosphate and the C-6 proR hydrogen from 5-enolpyruvylshikimate-3-phosphate (EPSP) to yield chorismate, which is the branch point compound that serves as the starting substrate for the three terminal pathways of aromatic amino acid biosynthesis. This reaction introduces a second double bond into the aromatic ring system. The polypeptide is Chorismate synthase (Staphylococcus haemolyticus (strain JCSC1435)).